The following is a 1214-amino-acid chain: Inner capsid protein VP3 (1214 aa).

The tract at residues 1–80 (MPRRSARKAQ…SVNNDGDIIT (80 aa)) is disordered. A compositionally biased stretch (polar residues) spans 8 to 18 (KAQSATASPAD). Positions 28 to 51 (PTTNSPPSTTSPNQAAADANQQQA) are enriched in low complexity. A C2H2-type zinc finger spans residues 117-140 (YVCNVCNARFSTMSALSEHLRSDH).

Belongs to the turreted BTV-fold inner capsid family. In terms of assembly, homodecamer; each decamer is made up of two conformers of VP2, called VP2A and VP2B. 12 homodecamers assemble to form an icosahedral capsid. Interacts with VP6.

It is found in the virion. Its function is as follows. Inner capsid protein that self-assembles to form an icosahedral capsid with a T=2 symmetry, which consists of 120 copies of VP2, with channels at each of its five-fold vertices. This capsid constitutes the innermost concentric layer of the viral mature particle. In Notemigonus crysoleucas (Golden shiner), this protein is Inner capsid protein VP3 (S3).